A 199-amino-acid chain; its full sequence is MPSTFSQPSPSNALVNDRRDVFPLSPLIKITLVNLYLALTVPLPILAQLTQGNALLTLLLTVGLMGGLVALVAALAEQVVLNGEGIAVRYPRWVPKFFRSGWQLSWADVTALKCRTTGQGGLVYYFLTESKDRAYLLPMRVAGFNRLTQLVSDHTGIDTQDVRPLSQPWMYLLLLLFTFLLWGSQLAIVLLLWSSPPLA.

3 helical membrane-spanning segments follow: residues Leu-27 to Ala-47, Leu-55 to Leu-75, and Leu-172 to Leu-192.

The protein resides in the cell membrane. This is an uncharacterized protein from Synechocystis sp. (strain ATCC 27184 / PCC 6803 / Kazusa).